We begin with the raw amino-acid sequence, 268 residues long: Pantothenate synthetase (268 aa).

18 to 25 (MGYLHEGH) is a binding site for ATP. H25 acts as the Proton donor in catalysis. Q49 lines the (R)-pantoate pocket. Residue Q49 coordinates beta-alanine. 135–138 (GQKD) contacts ATP. Position 141 (Q141) interacts with (R)-pantoate. ATP is bound by residues I164 and 172–175 (LSSR).

It belongs to the pantothenate synthetase family. Homodimer.

The protein localises to the cytoplasm. It catalyses the reaction (R)-pantoate + beta-alanine + ATP = (R)-pantothenate + AMP + diphosphate + H(+). It functions in the pathway cofactor biosynthesis; (R)-pantothenate biosynthesis; (R)-pantothenate from (R)-pantoate and beta-alanine: step 1/1. Catalyzes the condensation of pantoate with beta-alanine in an ATP-dependent reaction via a pantoyl-adenylate intermediate. This Dehalococcoides mccartyi (strain CBDB1) protein is Pantothenate synthetase.